We begin with the raw amino-acid sequence, 567 residues long: Mitochondrial distribution and morphology protein 34 (567 aa).

The SMP-LTD domain occupies 1-224 (MSFKFNEESF…LPSALFNMSR (224 aa)). The segment covering 392–416 (NKATETSSNLNADSEITPVSSSHNA) has biased composition (polar residues). Positions 392–453 (NKATETSSNL…NRSSSFTSSI (62 aa)) are disordered. Residues 417 to 452 (TSSVNTITSLTTSSLGSTAGSSNSKNTNRSSSFTSS) are compositionally biased toward low complexity.

This sequence belongs to the MDM34 family. Component of the ER-mitochondria encounter structure (ERMES) or MDM complex, composed of MMM1, MDM10, MDM12 and MDM34.

It is found in the mitochondrion outer membrane. In terms of biological role, component of the ERMES/MDM complex, which serves as a molecular tether to connect the endoplasmic reticulum (ER) and mitochondria. Components of this complex are involved in the control of mitochondrial shape and protein biogenesis, and function in nonvesicular lipid trafficking between the ER and mitochondria. MDM34 is required for the interaction of the ER-resident membrane protein MMM1 and the outer mitochondrial membrane-resident beta-barrel protein MDM10. The chain is Mitochondrial distribution and morphology protein 34 from Vanderwaltozyma polyspora (strain ATCC 22028 / DSM 70294 / BCRC 21397 / CBS 2163 / NBRC 10782 / NRRL Y-8283 / UCD 57-17) (Kluyveromyces polysporus).